Here is a 942-residue protein sequence, read N- to C-terminus: Homeobox transcription factor phx1 (942 aa).

Polar residues-rich tracts occupy residues 1–19 (MRSY…NINY), 61–73 (HLQG…TNPN), 99–116 (ADNN…TNPS), and 122–135 (IVKS…SKQN). Disordered regions lie at residues 1-54 (MRSY…MQLP), 61-80 (HLQG…PEFD), 87-172 (KQEK…KKQR), 604-651 (WANQ…STST), and 892-922 (SSSG…DVYS). Over residues 142–151 (SVEKAKENVA) the composition is skewed to basic and acidic residues. Over residues 153–164 (ESGTPESGGSTS) the composition is skewed to low complexity. The homeobox DNA-binding region spans 164-224 (SAPKSKKQRL…QNRRAKSKLI (61 aa)). Polar residues-rich tracts occupy residues 604–614 (WANQLPRQPDS) and 630–641 (SHDTSSEYGNKS).

Its subcellular location is the nucleus. In terms of biological role, trnascription factor that regulates the expression of the homocitrate synthase (HCS) lys4. The polypeptide is Homeobox transcription factor phx1 (phx1) (Schizosaccharomyces pombe (strain 972 / ATCC 24843) (Fission yeast)).